The chain runs to 124 residues: Single-stranded DNA-binding protein (124 aa).

It belongs to the phi29likevirus single-strand-binding protein family. As to quaternary structure, monomer.

Single-stranded DNA binding protein required for the elongation during viral DNA replication by strand displacement. Displaced viral DNA strands are transiently coated with the ssDNA-binding protein and therefore protected againt nucleases. The latter is then probably removed by the replisome that performs lagging strand synthesis or during the events that lead up to the recombination process. Has helix-destabilizing activity since it removes secondary structure from the ssDNA in replicative intermediates. This is Single-stranded DNA-binding protein (5) from Bacillus subtilis (Bacteriophage PZA).